Here is a 232-residue protein sequence, read N- to C-terminus: Large ribosomal subunit protein uL1 (232 aa).

Belongs to the universal ribosomal protein uL1 family. Part of the 50S ribosomal subunit.

Its function is as follows. Binds directly to 23S rRNA. The L1 stalk is quite mobile in the ribosome, and is involved in E site tRNA release. In terms of biological role, protein L1 is also a translational repressor protein, it controls the translation of the L11 operon by binding to its mRNA. This chain is Large ribosomal subunit protein uL1, found in Chlamydia trachomatis serovar D (strain ATCC VR-885 / DSM 19411 / UW-3/Cx).